The chain runs to 432 residues: Acetylserotonin O-methyltransferase (432 aa).

S-adenosyl-L-methionine contacts are provided by residues tyrosine 146, tryptophan 163, aspartate 209, 235–237, and arginine 252; that span reads GDF. Histidine 255 acts as the Proton donor/acceptor in catalysis. 3 residues coordinate substrate: aspartate 256, asparagine 302, and glutamine 306. The segment at 373-432 is disordered; sequence VPGARSDAAGTGSGTGNTGSGIMLQGETLESEVSAPQAGSDVGGAGNEPRSGTLKQGDWK.

The protein belongs to the class I-like SAM-binding methyltransferase superfamily. Cation-independent O-methyltransferase family. Homodimer. Expressed predominantly in the pineal gland (at protein level). Very low expression, if any, in the retina.

It carries out the reaction N-acetylserotonin + S-adenosyl-L-methionine = melatonin + S-adenosyl-L-homocysteine + H(+). The protein operates within aromatic compound metabolism; melatonin biosynthesis; melatonin from serotonin: step 1/2. Its function is as follows. Catalyzes the transfer of a methyl group onto N-acetylserotonin, producing melatonin (N-acetyl-5-methoxytryptamine). This Rattus norvegicus (Rat) protein is Acetylserotonin O-methyltransferase (Asmt).